The primary structure comprises 652 residues: Replication protein E1 (652 aa).

A Nuclear localization signal motif is present at residues 86 to 88; it reads KRK. A Phosphoserine; by host modification is found at Ser-92. The segment at 153-173 is disordered; the sequence is NNTNGEEEGENGGENGGSIRE. Residues 188-354 are DNA-binding region; sequence DPQSPTAQLK…LTVIQHGIDD (167 aa). Residues 453-603 form the SF3 helicase domain; sequence VEFITFLCAF…FPFDQNRNPV (151 aa). 479–486 contributes to the ATP binding site; sequence GPPNTGKS. Residue Lys-560 forms a Glycyl lysine isopeptide (Lys-Gly) (interchain with G-Cter in SUMO) linkage.

This sequence belongs to the papillomaviridae E1 protein family. As to quaternary structure, can form hexamers. Interacts with E2 protein; this interaction increases E1 DNA binding specificity. Interacts with host DNA polymerase subunit POLA2. Interacts with host single stranded DNA-binding protein RPA1. Interacts with host TOP1; this interaction stimulates the enzymatic activity of TOP1. In terms of processing, phosphorylated. Post-translationally, sumoylated.

Its subcellular location is the host nucleus. The catalysed reaction is Couples ATP hydrolysis with the unwinding of duplex DNA by translocating in the 3'-5' direction.. It catalyses the reaction ATP + H2O = ADP + phosphate + H(+). In terms of biological role, ATP-dependent DNA 3'-5' helicase required for initiation of viral DNA replication. It forms a complex with the viral E2 protein. The E1-E2 complex binds to the replication origin which contains binding sites for both proteins. During the initial step, a dimer of E1 interacts with a dimer of protein E2 leading to a complex that binds the viral origin of replication with high specificity. Then, a second dimer of E1 displaces the E2 dimer in an ATP-dependent manner to form the E1 tetramer. Following this, two E1 monomers are added to each half of the site, which results in the formation of two E1 trimers on the viral ori. Subsequently, two hexamers will be created. The double hexamer acts as a bi-directional helicase machinery and unwinds the viral DNA and then recruits the host DNA polymerase to start replication. The sequence is that of Replication protein E1 from Human papillomavirus type 70.